A 247-amino-acid polypeptide reads, in one-letter code: 1-(5-phosphoribosyl)-5-[(5-phosphoribosylamino)methylideneamino] imidazole-4-carboxamide isomerase 1 (247 aa).

Glutamate 8 (proton acceptor) is an active-site residue. Catalysis depends on aspartate 128, which acts as the Proton donor.

The protein belongs to the HisA/HisF family.

The protein localises to the cytoplasm. The catalysed reaction is 1-(5-phospho-beta-D-ribosyl)-5-[(5-phospho-beta-D-ribosylamino)methylideneamino]imidazole-4-carboxamide = 5-[(5-phospho-1-deoxy-D-ribulos-1-ylimino)methylamino]-1-(5-phospho-beta-D-ribosyl)imidazole-4-carboxamide. Its pathway is amino-acid biosynthesis; L-histidine biosynthesis; L-histidine from 5-phospho-alpha-D-ribose 1-diphosphate: step 4/9. This chain is 1-(5-phosphoribosyl)-5-[(5-phosphoribosylamino)methylideneamino] imidazole-4-carboxamide isomerase 1, found in Ruegeria sp. (strain TM1040) (Silicibacter sp.).